The following is a 377-amino-acid chain: Queuine tRNA-ribosyltransferase (377 aa).

The Proton acceptor role is filled by Asp-94. Substrate is bound by residues 94-98, Asp-148, Gln-191, and Gly-218; that span reads DSGGF. The tract at residues 249 to 255 is RNA binding; sequence GVGTPDD. Asp-268 acts as the Nucleophile in catalysis. The interval 273 to 277 is RNA binding; important for wobble base 34 recognition; it reads TRAGR.

The protein belongs to the queuine tRNA-ribosyltransferase family. In terms of assembly, homodimer. Within each dimer, one monomer is responsible for RNA recognition and catalysis, while the other monomer binds to the replacement base PreQ1.

It catalyses the reaction 7-aminomethyl-7-carbaguanine + guanosine(34) in tRNA = 7-aminomethyl-7-carbaguanosine(34) in tRNA + guanine. It functions in the pathway tRNA modification; tRNA-queuosine biosynthesis. Catalyzes the base-exchange of a guanine (G) residue with the queuine precursor 7-aminomethyl-7-deazaguanine (PreQ1) at position 34 (anticodon wobble position) in tRNAs with GU(N) anticodons (tRNA-Asp, -Asn, -His and -Tyr). Catalysis occurs through a double-displacement mechanism. The nucleophile active site attacks the C1' of nucleotide 34 to detach the guanine base from the RNA, forming a covalent enzyme-RNA intermediate. The proton acceptor active site deprotonates the incoming PreQ1, allowing a nucleophilic attack on the C1' of the ribose to form the product. After dissociation, two additional enzymatic reactions on the tRNA convert PreQ1 to queuine (Q), resulting in the hypermodified nucleoside queuosine (7-(((4,5-cis-dihydroxy-2-cyclopenten-1-yl)amino)methyl)-7-deazaguanosine). The protein is Queuine tRNA-ribosyltransferase of Brucella melitensis biotype 1 (strain ATCC 23456 / CCUG 17765 / NCTC 10094 / 16M).